A 217-amino-acid chain; its full sequence is Pre-mRNA-splicing factor sap62 (217 aa).

The segment at 54–84 adopts a Matrin-type zinc-finger fold; that stretch reads FECRLCLTTHANENSYLTHTQGKKHQTNLAR.

This sequence belongs to the SF3A2 family. As to quaternary structure, belongs to the 40S cdc5-associated complex (or cwf complex), a spliceosome sub-complex reminiscent of a late-stage spliceosome composed of the U2, U5 and U6 snRNAs and at least brr2, cdc5, cwf2/prp3, cwf3/syf1, cwf4/syf3, cwf5/ecm2, spp42/cwf6, cwf7/spf27, cwf8, cwf9, cwf10, cwf11, cwf12, prp45/cwf13, cwf14, cwf15, cwf16, cwf17, cwf18, cwf19, cwf20, cwf21, cwf22, cwf23, cwf24, cwf25, cwf26, cyp7/cwf27, cwf28, cwf29/ist3, lea1, msl1, prp5/cwf1, prp10, prp12/sap130, prp17, prp22, sap61, sap62, sap114, sap145, slu7, smb1, smd1, smd3, smf1, smg1 and syf2.

It is found in the nucleus. It localises to the cytoplasm. Its function is as follows. Involved in mRNA splicing where it associates with cdc5 and the other cwf proteins as part of the spliceosome. This is Pre-mRNA-splicing factor sap62 (sap62) from Schizosaccharomyces pombe (strain 972 / ATCC 24843) (Fission yeast).